A 312-amino-acid polypeptide reads, in one-letter code: Molybdenum cofactor biosynthesis bifunctional protein (312 aa).

The interval 1-155 is molybdenum cofactor biosynthesis protein C; sequence MEFTHLDENG…GGKSSAAEYH (155 aa). Residues 74-76 and 110-111 contribute to the substrate site; these read LCH and ME. Asp-125 is an active-site residue. Residues 156–312 form a molybdenum cofactor biosynthesis protein B region; the sequence is PRTAILVMSD…FPMLKGDGHA (157 aa).

In the N-terminal section; belongs to the MoaC family. The protein in the C-terminal section; belongs to the MoaB/Mog family.

It catalyses the reaction (8S)-3',8-cyclo-7,8-dihydroguanosine 5'-triphosphate = cyclic pyranopterin phosphate + diphosphate. It functions in the pathway cofactor biosynthesis; molybdopterin biosynthesis. In terms of biological role, catalyzes the conversion of (8S)-3',8-cyclo-7,8-dihydroguanosine 5'-triphosphate to cyclic pyranopterin monophosphate (cPMP). This chain is Molybdenum cofactor biosynthesis bifunctional protein (moaCB), found in Chlorobaculum tepidum (strain ATCC 49652 / DSM 12025 / NBRC 103806 / TLS) (Chlorobium tepidum).